The following is a 388-amino-acid chain: Trans-enoyl reductase tenC (388 aa).

51-54 is a binding site for NADP(+); it reads VDGK. 142-149 is a substrate binding site; it reads VGIASVGM. Residues 219–222, tyrosine 237, and 284–285 each bind NADP(+); these read SSES and LD. 304–308 lines the substrate pocket; sequence SFTQF. 373–374 lines the NADP(+) pocket; it reads IK.

Belongs to the zinc-containing alcohol dehydrogenase family. In terms of assembly, monomer.

It participates in secondary metabolite biosynthesis. Trans-enoyl reductase; part of the gene cluster that mediates the biosynthesis of tenellin-type 2-pyridones, iron-chelating compounds involved in iron stress tolerance, competition with the natural competitor fungus Metarhizium robertsii and insect hosts infection. TenC collaborates with the hybrid PKS-NRPS synthetase tenS to catalyze the assembly of the polyketide-amino acid backbone, since tenS lacks a designated enoylreductase (ER) domain. Upon formation of the polyketide backbone on the thiotemplate of tenS, the triketide is transferred to the NRPS module and linked to tyrosine to produce the pyrrolidine-2-dione intermediates, including pretellinin A, 11-hydropretellenin A, 12-hydropretellenin A, 13-hydropretellenin A, 14-hydropretellenin A, 12-oxopretellenin A and prototellinin D. The pathway begins with the assembly of the polyketide-amino acid backbone by the hybrid PKS-NRPS tenS with the help of the enoyl reductase tenC. These enzymes catalyze the synthesis of the pyrrolidine-2-dione intermediates pretellinin A, 11-hydropretellenin A, 12-hydropretellenin A, 13-hydropretellenin A, 14-hydropretellenin A, 12-oxopretellenin A and prototellinin D. The cytochrome P450 monooxygenase tenA then catalyzes an oxidative ring expansion of pretenellin A and 14-hydropretellenin A to form the 2-pyridone core, leading to pretenellin B and pyridovericin, respectively. The cytochrome P450 monooxygenase tenB is then required for the selective N-hydroxylation of the 2-pyridone nitrogen of yield tellinin and 15-hydroxytellenin (15-HT), respectively. The UDP-glucosyltransferase GT1 and the methyltransferase MT1, located outside the tenS gene cluster, contribute to the stepwise glycosylation and methylation of 15-HT to obtain the glycoside pyridovericin-N-O-(4-O-methyl-beta-D-glucopyranoside) (PMGP). Additional related compounds such as 1-O-methyl-15-HT, (8Z)-1-O-methyl-15-HT, and O-methyltenellin A are also produced but the enzymes involved in their biosynthesis have still to be determined. This is Trans-enoyl reductase tenC from Beauveria bassiana (strain ARSEF 2860) (White muscardine disease fungus).